We begin with the raw amino-acid sequence, 207 residues long: Large ribosomal subunit protein uL4 (207 aa).

A disordered region spans residues 56–76; it reads EVRGGGRKPWRQKGTGRARAG. Positions 60 to 71 are enriched in basic residues; sequence GGRKPWRQKGTG.

The protein belongs to the universal ribosomal protein uL4 family. In terms of assembly, part of the 50S ribosomal subunit.

One of the primary rRNA binding proteins, this protein initially binds near the 5'-end of the 23S rRNA. It is important during the early stages of 50S assembly. It makes multiple contacts with different domains of the 23S rRNA in the assembled 50S subunit and ribosome. In terms of biological role, forms part of the polypeptide exit tunnel. The chain is Large ribosomal subunit protein uL4 from Desulfitobacterium hafniense (strain Y51).